The chain runs to 497 residues: Bloodstream-specific protein 2 (497 aa).

Positions 1–14 (MRAIFLVALALATM) are cleaved as a signal peptide. Residues 15–124 (RESTAESLKL…IIKYIKANVG (110 aa)) form the Thioredoxin 1 domain. Residue asparagine 30 is glycosylated (N-linked (GlcNAc...) asparagine). An intrachain disulfide couples cysteine 48 to cysteine 51. N-linked (GlcNAc...) asparagine glycans are attached at residues asparagine 63, asparagine 85, asparagine 153, asparagine 154, asparagine 250, and asparagine 278. A Thioredoxin 2 domain is found at 334–455 (EPTIKSLPVP…VYEFVRKHVT (122 aa)). Active-site nucleophile residues include cysteine 378 and cysteine 381. Cysteine 378 and cysteine 381 are disulfide-bonded. N-linked (GlcNAc...) asparagine glycans are attached at residues asparagine 413, asparagine 465, asparagine 476, asparagine 482, asparagine 485, and asparagine 488. Residues 461 to 497 (EKPANVTEEKKSEEENKSSKSNESNDSNESNVDKQDL) form a disordered region. Over residues 467 to 480 (TEEKKSEEENKSSK) the composition is skewed to basic and acidic residues. Low complexity predominate over residues 481–490 (SNESNDSNES).

Belongs to the protein disulfide isomerase family.

This is Bloodstream-specific protein 2 (BS2) from Trypanosoma brucei brucei.